Reading from the N-terminus, the 472-residue chain is Siroheme synthase 1 (472 aa).

The tract at residues 1–203 is precorrin-2 dehydrogenase /sirohydrochlorin ferrochelatase; sequence MDYLPLFADL…GQLAQAEEEL (203 aa). NAD(+)-binding positions include 22 to 23 and 43 to 44; these read EV and QT. S128 carries the phosphoserine modification. Residues 215–472 are uroporphyrinogen-III C-methyltransferase; the sequence is GEVALVGAGP…AISPSVVNLA (258 aa). P224 contacts S-adenosyl-L-methionine. D247 serves as the catalytic Proton acceptor. K269 acts as the Proton donor in catalysis. S-adenosyl-L-methionine contacts are provided by residues 300–302, I305, 330–331, M382, and G411; these read GGD and TA.

This sequence in the N-terminal section; belongs to the precorrin-2 dehydrogenase / sirohydrochlorin ferrochelatase family. The protein in the C-terminal section; belongs to the precorrin methyltransferase family.

The enzyme catalyses uroporphyrinogen III + 2 S-adenosyl-L-methionine = precorrin-2 + 2 S-adenosyl-L-homocysteine + H(+). It catalyses the reaction precorrin-2 + NAD(+) = sirohydrochlorin + NADH + 2 H(+). It carries out the reaction siroheme + 2 H(+) = sirohydrochlorin + Fe(2+). Its pathway is cofactor biosynthesis; adenosylcobalamin biosynthesis; precorrin-2 from uroporphyrinogen III: step 1/1. The protein operates within cofactor biosynthesis; adenosylcobalamin biosynthesis; sirohydrochlorin from precorrin-2: step 1/1. It participates in porphyrin-containing compound metabolism; siroheme biosynthesis; precorrin-2 from uroporphyrinogen III: step 1/1. It functions in the pathway porphyrin-containing compound metabolism; siroheme biosynthesis; siroheme from sirohydrochlorin: step 1/1. Its pathway is porphyrin-containing compound metabolism; siroheme biosynthesis; sirohydrochlorin from precorrin-2: step 1/1. Functionally, multifunctional enzyme that catalyzes the SAM-dependent methylations of uroporphyrinogen III at position C-2 and C-7 to form precorrin-2 via precorrin-1. Then it catalyzes the NAD-dependent ring dehydrogenation of precorrin-2 to yield sirohydrochlorin. Finally, it catalyzes the ferrochelation of sirohydrochlorin to yield siroheme. This is Siroheme synthase 1 from Yersinia enterocolitica serotype O:8 / biotype 1B (strain NCTC 13174 / 8081).